Reading from the N-terminus, the 65-residue chain is MAKNKEIRINVTLECTNCANNSQKSSRGISRYITQKNRRNTPNRLELNKFCPYCVGHTVHKEIKK.

This sequence belongs to the bacterial ribosomal protein bL33 family.

It is found in the plastid. Its subcellular location is the chloroplast. In Zygnema circumcarinatum (Green alga), this protein is Large ribosomal subunit protein bL33c.